We begin with the raw amino-acid sequence, 54 residues long: Large ribosomal subunit protein bL32c (54 aa).

The protein belongs to the bacterial ribosomal protein bL32 family.

It is found in the plastid. The protein localises to the chloroplast. This Helianthus annuus (Common sunflower) protein is Large ribosomal subunit protein bL32c.